Here is a 337-residue protein sequence, read N- to C-terminus: Anthranilate phosphoribosyltransferase (337 aa).

5-phospho-alpha-D-ribose 1-diphosphate-binding positions include G80, 83-84, T88, 90-93, 108-116, and S120; these read GD, NIST, and KHGNRAVSS. G80 contributes to the anthranilate binding site. Residue S92 coordinates Mg(2+). N111 lines the anthranilate pocket. R166 serves as a coordination point for anthranilate. Mg(2+)-binding residues include D224 and E225.

It belongs to the anthranilate phosphoribosyltransferase family. Homodimer. Mg(2+) serves as cofactor.

The catalysed reaction is N-(5-phospho-beta-D-ribosyl)anthranilate + diphosphate = 5-phospho-alpha-D-ribose 1-diphosphate + anthranilate. It functions in the pathway amino-acid biosynthesis; L-tryptophan biosynthesis; L-tryptophan from chorismate: step 2/5. Its function is as follows. Catalyzes the transfer of the phosphoribosyl group of 5-phosphorylribose-1-pyrophosphate (PRPP) to anthranilate to yield N-(5'-phosphoribosyl)-anthranilate (PRA). This is Anthranilate phosphoribosyltransferase from Anaeromyxobacter dehalogenans (strain 2CP-1 / ATCC BAA-258).